The sequence spans 390 residues: 3-ketoacyl-CoA thiolase (390 aa).

C95 acts as the Acyl-thioester intermediate in catalysis. Active-site proton acceptor residues include H346 and C376.

The protein belongs to the thiolase-like superfamily. Thiolase family. Heterotetramer of two alpha chains (FadB) and two beta chains (FadA).

The protein localises to the cytoplasm. It catalyses the reaction an acyl-CoA + acetyl-CoA = a 3-oxoacyl-CoA + CoA. It functions in the pathway lipid metabolism; fatty acid beta-oxidation. In terms of biological role, catalyzes the final step of fatty acid oxidation in which acetyl-CoA is released and the CoA ester of a fatty acid two carbons shorter is formed. The polypeptide is 3-ketoacyl-CoA thiolase (Psychrobacter sp. (strain PRwf-1)).